The sequence spans 518 residues: Glutamate--cysteine ligase (518 aa).

Belongs to the glutamate--cysteine ligase type 1 family. Type 1 subfamily.

It carries out the reaction L-cysteine + L-glutamate + ATP = gamma-L-glutamyl-L-cysteine + ADP + phosphate + H(+). The protein operates within sulfur metabolism; glutathione biosynthesis; glutathione from L-cysteine and L-glutamate: step 1/2. This is Glutamate--cysteine ligase from Escherichia coli O139:H28 (strain E24377A / ETEC).